The following is a 327-amino-acid chain: Olfactory receptor 51T1 (327 aa).

Residues 1 to 27 (MAIFNNTTSSSSNFLLTAFPGLECAHV) lie on the Extracellular side of the membrane. N-linked (GlcNAc...) asparagine glycans are attached at residues N5 and N6. Residues 28-48 (WISIPVCCLYTIALLGNSMIF) traverse the membrane as a helical segment. At 49-56 (LVIITKRR) the chain is on the cytoplasmic side. A helical transmembrane segment spans residues 57-77 (LHKPMYYFLSMLAAVDLCLTI). Residues 78–101 (TTLPTVLGVLWFHAREISFKACFI) are Extracellular-facing. Residues 102–122 (QMFFVHAFSLLESSVLVAMAF) form a helical membrane-spanning segment. Topologically, residues 123–141 (DRFVAICNPLNYATILTDR) are cytoplasmic. Residues 142 to 162 (MVLVIGLVICIRPAVFLLPLL) traverse the membrane as a helical segment. Residues 163–198 (VAINTVSFHGGHELSHPFCYHPEVIKYTYSKPWISS) are Extracellular-facing. Residues 199 to 219 (FWGLFLQLYLNGTDVLFILFS) form a helical membrane-spanning segment. Over 220–239 (YVLILRTVLGIVARKKQQKA) the chain is Cytoplasmic. A helical transmembrane segment spans residues 240 to 260 (LSTCVCHICAVTIFYVPLISL). The Extracellular portion of the chain corresponds to 261–275 (SLAHRLFHSTPRVLC). Residues 276–296 (STLANIYLLLPPVLNPIIYSL) form a helical membrane-spanning segment. Over 297 to 327 (KTKTIRQAMFQLLQSKGSWGFNVRGLRGRWD) the chain is Cytoplasmic.

Belongs to the G-protein coupled receptor 1 family.

It localises to the cell membrane. In terms of biological role, odorant receptor. This Homo sapiens (Human) protein is Olfactory receptor 51T1 (OR51T1).